We begin with the raw amino-acid sequence, 300 residues long: Solute carrier family 25 member 35 (300 aa).

Solcar repeat units lie at residues 1–90, 100–193, and 203–294; these read MDFL…AEAG, HSPA…TKDL, and QSWK…LRSL. The next 6 membrane-spanning stretches (helical) occupy residues 38 to 58, 59 to 79, 91 to 119, 169 to 190, 205 to 225, and 277 to 300; these read TYQRHYRNVFHAFITIGKVDG, LAALQKGLAPALLYQFLMNGI, GYLHTAEGTHSPARSAAAGAMAGVMGAYL, ALGGLPRVIVGSSTQLCTFSST, WKLALVAAMMSGIAVVLAMAP, and LGPHTILSLFFWDQLRSLYYTDTK.

The protein belongs to the mitochondrial carrier (TC 2.A.29) family.

The protein resides in the mitochondrion inner membrane. It catalyses the reaction a dicarboxylate(in) + sulfate(out) = a dicarboxylate(out) + sulfate(in). Functionally, putative antiporter that exchanges dicarboxylates and sulfur oxoanions across the inner membrane of mitochondria. The sequence is that of Solute carrier family 25 member 35 (SLC25A35) from Homo sapiens (Human).